Consider the following 152-residue polypeptide: Large ribosomal subunit protein uL15 (152 aa).

The disordered stretch occupies residues 1-54 (MGLKLNELSPGVGAKKTAHRKGRGIGSGLGKTGGRGVKGQKSRSGSGVRRGFEG). Residues 24–37 (GIGSGLGKTGGRGV) show a composition bias toward gly residues.

It belongs to the universal ribosomal protein uL15 family. Part of the 50S ribosomal subunit.

Functionally, binds to the 23S rRNA. In Psychrobacter sp. (strain PRwf-1), this protein is Large ribosomal subunit protein uL15.